The following is a 348-amino-acid chain: Anthranilate phosphoribosyltransferase (348 aa).

5-phospho-alpha-D-ribose 1-diphosphate-binding positions include Gly-89, 92-93, Thr-97, 99-102, 117-125, and Ser-129; these read GD, NIST, and KHGNRSVSS. Position 89 (Gly-89) interacts with anthranilate. Ser-101 serves as a coordination point for Mg(2+). Asn-120 contributes to the anthranilate binding site. Arg-175 is a binding site for anthranilate. 2 residues coordinate Mg(2+): Asp-233 and Glu-234.

This sequence belongs to the anthranilate phosphoribosyltransferase family. In terms of assembly, homodimer. Requires Mg(2+) as cofactor.

The enzyme catalyses N-(5-phospho-beta-D-ribosyl)anthranilate + diphosphate = 5-phospho-alpha-D-ribose 1-diphosphate + anthranilate. Its pathway is amino-acid biosynthesis; L-tryptophan biosynthesis; L-tryptophan from chorismate: step 2/5. In terms of biological role, catalyzes the transfer of the phosphoribosyl group of 5-phosphorylribose-1-pyrophosphate (PRPP) to anthranilate to yield N-(5'-phosphoribosyl)-anthranilate (PRA). This chain is Anthranilate phosphoribosyltransferase, found in Shewanella putrefaciens (strain CN-32 / ATCC BAA-453).